The following is a 411-amino-acid chain: 2-oxoglutarate-dependent dioxygenase AOP3 (411 aa).

In terms of domain architecture, Fe2OG dioxygenase spans 259 to 356 (GNASVGAKEA…RYAAALFSNP (98 aa)). Fe cation-binding residues include His279, Asp281, and His336. 2-oxoglutarate is bound at residue Arg347.

This sequence belongs to the iron/ascorbate-dependent oxidoreductase family. Fe(2+) serves as cofactor. As to expression, not expressed.

In terms of biological role, 2-oxoglutarate-dependent dioxygenase involved in glucosinolates biosynthesis. Catalyzes the conversion of methylsulfinylalkyl glucosinolates to hydroxyalkyl glucosinolates. This chain is 2-oxoglutarate-dependent dioxygenase AOP3 (AOP3), found in Arabidopsis thaliana (Mouse-ear cress).